Here is a 760-residue protein sequence, read N- to C-terminus: Catalase-peroxidase (760 aa).

Residues 1–45 form the signal peptide; that stretch reads MKGTPFRSPHLYQEGSSCMHRTIRSVAAVLTVVLSATIPMVPAWS. The tryptophyl-tyrosyl-methioninium (Trp-Tyr) (with M-271) cross-link spans 124-245; the sequence is WHGAGTYRTY…LAATQMGLIY (122 aa). Residue His-125 is the Proton acceptor of the active site. The tryptophyl-tyrosyl-methioninium (Tyr-Met) (with W-124) cross-link spans 245-271; it reads YVNPEGPNGVPDPVAAARDIREAFGGM. His-286 is a binding site for heme b.

Belongs to the peroxidase family. Peroxidase/catalase subfamily. Homodimer or homotetramer. Heme b is required as a cofactor. Post-translationally, formation of the three residue Trp-Tyr-Met cross-link is important for the catalase, but not the peroxidase activity of the enzyme.

The catalysed reaction is H2O2 + AH2 = A + 2 H2O. The enzyme catalyses 2 H2O2 = O2 + 2 H2O. Bifunctional enzyme with both catalase and broad-spectrum peroxidase activity. This Granulibacter bethesdensis (strain ATCC BAA-1260 / CGDNIH1) protein is Catalase-peroxidase.